A 320-amino-acid chain; its full sequence is Polynucleotide 5'-triphosphatase CTL1 (320 aa).

A compositionally biased stretch (polar residues) spans 1–12 (MSDQPETPSNSR). A disordered region spans residues 1–23 (MSDQPETPSNSRNSHENVGAKKA). Residues 13-23 (NSHENVGAKKA) are compositionally biased toward basic and acidic residues.

This sequence belongs to the fungal TPase family. The cofactor is Mg(2+). Mn(2+) serves as cofactor.

Its subcellular location is the cytoplasm. It is found in the nucleus. The enzyme catalyses a 5'-end triphospho-ribonucleoside in mRNA + H2O = a 5'-end diphospho-ribonucleoside in mRNA + phosphate + H(+). Its function is as follows. Probably involved in an RNA processing event other than mRNA capping. Releases gamma-phosphate from the 5'-end of RNA to produce a diphosphate terminus. In Saccharomyces cerevisiae (strain ATCC 204508 / S288c) (Baker's yeast), this protein is Polynucleotide 5'-triphosphatase CTL1.